Consider the following 611-residue polypeptide: MSVQVVSAAAAAKVPEVELKDLSPSEAESQLGLSTAAVGAMAPPAGGGDPEAPAPAAERPPVPGPGSGPAAALSPAAGKVPQASAMKRSDPHHQHQRHRDGGEALVSPDGTVTEAPRTVKKQIQFADQKQEFNKRPTKIGRRSLSRSISQSSTDSYSSAASYTDSSDDETSPRDKQQKNSKGSSDFCVKNIKQAEFGRREIEIAEQEMPALMALRKRAQGEKPLAGAKIVGCTHITAQTAVLMETLGALGAQCRWAACNIYSTLNEVAAALAESGFPVFAWKGESEDDFWWCIDRCVNVEGWQPNMILDDGGDLTHWIYKKYPNMFKKIKGIVEESVTGVHRLYQLSKAGKLCVPAMNVNDSVTKQKFDNLYCCRESILDGLKRTTDMMFGGKQVVVCGYGEVGKGCCAALKAMGSIVYVTEIDPICALQACMDGFRLVKLNEVIRQVDIVITCTGNKNVVTREHLDRMKNSCIVCNMGHSNTEIDVASLRTPELTWERVRSQVDHVIWPDGKRIVLLAEGRLLNLSCSTVPTFVLSITATTQALALIELYNAPEGRYKQDVYLLPKKMDEYVASLHLPTFDAHLTELTDEQAKYLGLNKNGPFKPNYYRY.

Low complexity-rich tracts occupy residues 1–14, 36–57, and 68–81; these read MSVQVVSAAAAAKV, AAVGAMAPPAGGGDPEAPAPAA, and GPAAALSPAAGKVP. The interval 1 to 184 is disordered; sequence MSVQVVSAAA…KQQKNSKGSS (184 aa). An N-acetylserine modification is found at Ser2. Residues 2–109 form an LISN domain, inhibits interaction with ITPR1 region; that stretch reads SVQVVSAAAA…DGGEALVSPD (108 aa). At Ser107 the chain carries Phosphoserine. Basic residues predominate over residues 135–144; the sequence is RPTKIGRRSL. Residues 145-164 show a composition bias toward low complexity; that stretch reads SRSISQSSTDSYSSAASYTD. A phosphoserine mark is found at Ser149, Ser152, Ser155, and Ser158. Thr236, Asp310, and Glu335 together coordinate substrate. NAD(+) is bound at residue 336–338; that stretch reads SVT. Lys365 and Asp369 together coordinate substrate. Residues Asn370, 401-406, Glu422, Asn457, 478-479, and Asn525 contribute to the NAD(+) site; these read GEVGKG and MG.

It belongs to the adenosylhomocysteinase family. In terms of assembly, homotetramer. Forms heteromultimers with AHCYL1 (via the C-terminal region). Interacts with ITPR1; with lower affinity than AHCYL1 and maybe via ITPR1. Interacts with SLC4A4. Interacts with ZCCHC4. It depends on NAD(+) as a cofactor. In terms of processing, phosphorylated during neuronal differentiation at the LISN domain.

Its subcellular location is the cytoplasm. The protein resides in the microsome. The catalysed reaction is S-adenosyl-L-homocysteine + H2O = L-homocysteine + adenosine. The protein operates within amino-acid biosynthesis; L-homocysteine biosynthesis; L-homocysteine from S-adenosyl-L-homocysteine: step 1/1. May regulate the electrogenic sodium/bicarbonate cotransporter SLC4A4 activity and Mg(2+)-sensitivity. On the contrary of its homolog AHCYL1, does not regulate ITPR1 sensitivity to inositol 1,4,5-trisphosphate. This Homo sapiens (Human) protein is Adenosylhomocysteinase 3 (AHCYL2).